The chain runs to 1692 residues: Fatty acid synthase alpha subunit hexA (1692 aa).

A disordered region spans residues 44–80 (AVEEPVDETPAPETAPERPPLSRAKTAAVKPQETAAP). In terms of domain architecture, Carrier spans 90 to 174 (LSAEEIVRAL…RVSSALLSKL (85 aa)). Ser-125 is modified (O-(pantetheine 4'-phosphoryl)serine). Residues 508-746 (FAGKNILITG…IAMLMTPELV (239 aa)) are ketoreductase (KR) domain. The region spanning 948–1430 (KEYLHEVAVE…QKGGQVVGVA (483 aa)) is the Ketosynthase family 3 (KS3) domain. The For beta-ketoacyl synthase activity role is filled by Cys-1135. The interval 1263 to 1287 (GQAQLDKSSPSTNTTSRTSSVSLAR) is disordered. The segment covering 1270–1284 (SSPSTNTTSRTSSVS) has biased composition (low complexity). Catalysis depends on for beta-ketoacyl synthase activity residues His-1315 and His-1356. Asp-1569 provides a ligand contact to Mg(2+). Residues 1569 to 1571 (DLV), 1615 to 1625 (EAVFKCLHTQT), 1639 to 1642 (KSDN), and 1668 to 1670 (ISH) contribute to the acetyl-CoA site. Ser-1669 serves as a coordination point for Mg(2+).

Belongs to the thiolase-like superfamily. Fungal fatty acid synthetase subunit alpha family. In terms of assembly, [Alpha(6)beta(6)] hexamers of two multifunctional subunits (alpha and beta). 4'-phosphopantetheine is transferred from CoA to a specific serine of the acyl carrier domain by the C-terminal PPT domain. This modification is essential for activity because fatty acids are bound in thioester linkage to the sulfhydryl of the prosthetic group.

The catalysed reaction is acetyl-CoA + n malonyl-CoA + 2n NADPH + 4n H(+) = a long-chain-acyl-CoA + n CoA + n CO2 + 2n NADP(+).. The enzyme catalyses a fatty acyl-[ACP] + malonyl-[ACP] + H(+) = a 3-oxoacyl-[ACP] + holo-[ACP] + CO2. It carries out the reaction a (3R)-hydroxyacyl-[ACP] + NADP(+) = a 3-oxoacyl-[ACP] + NADPH + H(+). Its pathway is mycotoxin biosynthesis. Its function is as follows. Fatty acid synthase alpha subunit; part of the fragmented gene cluster that mediates the biosynthesis of dothistromin (DOTH), a polyketide toxin very similar in structure to the aflatoxin precursor, versicolorin B. The first step of the pathway is the conversion of acetate to norsolorinic acid (NOR) and requires the fatty acid synthase subunits hexA and hexB, as well as the polyketide synthase pksA. PksA combines a hexanoyl starter unit and 7 malonyl-CoA extender units to synthesize the precursor NOR. The hexanoyl starter unit is provided to the acyl-carrier protein (ACP) domain by the fungal fatty acid synthase hexA/hexB. The second step is the conversion of NOR to averantin (AVN) and requires the norsolorinic acid ketoreductase nor1, which catalyzes the dehydration of norsolorinic acid to form (1'S)-averantin. The cytochrome P450 monooxygenase avnA then catalyzes the hydroxylation of AVN to 5'hydroxyaverantin (HAVN). The next step is performed by adhA that transforms HAVN to averufin (AVF). Averufin might then be converted to hydroxyversicolorone by cypX and avfA. Hydroxyversicolorone is further converted versiconal hemiacetal acetate (VHA) by moxY. VHA is then the substrate for the versiconal hemiacetal acetate esterase est1 to yield versiconal (VAL). Versicolorin B synthase vbsA then converts VAL to versicolorin B (VERB) by closing the bisfuran ring. Then, the activity of the versicolorin B desaturase verB leads to versicolorin A (VERA). DotB, a predicted chloroperoxidase, may perform epoxidation of the A-ring of VERA. Alternatively, a cytochrome P450, such as cypX or avnA could catalyze this step. It is also possible that another, uncharacterized, cytochrome P450 enzyme is responsible for this step. Opening of the epoxide could potentially be achieved by the epoxide hydrolase epoA. However, epoA seems not to be required for DOTH biosynthesis, but other epoxide hydrolases may have the ability to complement this hydrolysis. Alternatively, opening of the epoxide ring could be achieved non-enzymatically. The next step is the deoxygenation of ring A to yield the 5,8-dihydroxyanthraquinone which is most likely catalyzed by the NADPH dehydrogenase encoded by ver1. The last stages of DOTH biosynthesis are proposed to involve hydroxylation of the bisfuran. OrdB and norB might have oxidative roles here. An alternative possibility is that cytochrome P450 monoogenases such as avnA and cypX might perform these steps in addition to previously proposed steps. The chain is Fatty acid synthase alpha subunit hexA from Dothistroma septosporum (strain NZE10 / CBS 128990) (Red band needle blight fungus).